A 105-amino-acid polypeptide reads, in one-letter code: 3-phenylpropionate/cinnamic acid dioxygenase ferredoxin subunit (105 aa).

Residues 4–99 (LFVCTVEELP…VVVKDGNIYI (96 aa)) enclose the Rieske domain. The [2Fe-2S] cluster site is built by C42, H44, C62, and H65.

It belongs to the bacterial ring-hydroxylating dioxygenase ferredoxin component family. In terms of assembly, this dioxygenase system consists of four proteins: the two subunits of the hydroxylase component (HcaE and HcaF), a ferredoxin (HcaC) and a ferredoxin reductase (HcaD). [2Fe-2S] cluster serves as cofactor.

It functions in the pathway aromatic compound metabolism; 3-phenylpropanoate degradation. Its function is as follows. Part of the multicomponent 3-phenylpropionate dioxygenase, that converts 3-phenylpropionic acid (PP) and cinnamic acid (CI) into 3-phenylpropionate-dihydrodiol (PP-dihydrodiol) and cinnamic acid-dihydrodiol (CI-dihydrodiol), respectively. This protein seems to be a 2Fe-2S ferredoxin. This Photorhabdus laumondii subsp. laumondii (strain DSM 15139 / CIP 105565 / TT01) (Photorhabdus luminescens subsp. laumondii) protein is 3-phenylpropionate/cinnamic acid dioxygenase ferredoxin subunit.